We begin with the raw amino-acid sequence, 251 residues long: UDP-N-acetylglucosamine--dolichyl-phosphate N-acetylglucosaminyltransferase (251 aa).

Residues 150–167 form a helical membrane-spanning segment; sequence VGNLGLSFITFLLGGYYV.

The protein belongs to the glycosyltransferase 2 family.

The protein localises to the cell membrane. It catalyses the reaction a di-trans,poly-cis-dolichyl phosphate + UDP-N-acetyl-alpha-D-glucosamine = an N-acetyl-alpha-D-glucosaminyl-phospho-di-trans,poly-cis-dolichol + UDP. The protein operates within cell surface structure biogenesis; S-layer biogenesis. Its pathway is protein modification; protein glycosylation. Functionally, involved in the assembly of an N-linked disaccharide that decorates the S-layer glycoprotein and flagellins. AglK initiates N-linked glycosylation through the formation of alpha-linked dolichyl monophosphate N-acetylglucosamine. It catalyzes the transfer of GlcNAc from the donor substrate UDP-GlcNAc to dolichyl phosphate C55 (Dol-P) to yield Dol-P-GlcNAc. AglK reaction proceeds with retention of stereochemistry. The reaction is specific for UDP-GlcNAc. AglK shows a stronger preference for short dolichol (C55-60 Dol-P) substrates compared with the longer (C85-105 Dol-P). The chain is UDP-N-acetylglucosamine--dolichyl-phosphate N-acetylglucosaminyltransferase from Methanococcus voltae.